Reading from the N-terminus, the 203-residue chain is Small ribosomal subunit protein uS4 (203 aa).

An S4 RNA-binding domain is found at 93–156; sequence RRLDNVVYRL…MKVPAILEAV (64 aa).

Belongs to the universal ribosomal protein uS4 family. Part of the 30S ribosomal subunit. Contacts protein S5. The interaction surface between S4 and S5 is involved in control of translational fidelity.

One of the primary rRNA binding proteins, it binds directly to 16S rRNA where it nucleates assembly of the body of the 30S subunit. In terms of biological role, with S5 and S12 plays an important role in translational accuracy. The chain is Small ribosomal subunit protein uS4 from Streptococcus equi subsp. equi (strain 4047).